A 357-amino-acid polypeptide reads, in one-letter code: Protein MGF 360-22R (357 aa).

The stretch at D66–I98 is one ANK repeat.

It belongs to the asfivirus MGF 360 family.

Plays a role in virus cell tropism, and may be required for efficient virus replication in macrophages. The polypeptide is Protein MGF 360-22R (African swine fever virus (isolate Tick/Malawi/Lil 20-1/1983) (ASFV)).